We begin with the raw amino-acid sequence, 333 residues long: Holliday junction branch migration complex subunit RuvB (333 aa).

The interval 1 to 181 (MTRILDNDLI…FGITGHMEYY (181 aa)) is large ATPase domain (RuvB-L). Residues leucine 20, arginine 21, glycine 62, lysine 65, threonine 66, threonine 67, 128-130 (EDF), arginine 171, tyrosine 181, and arginine 218 contribute to the ATP site. Threonine 66 serves as a coordination point for Mg(2+). The small ATPAse domain (RuvB-S) stretch occupies residues 182–252 (QTADLTEIVE…ITDKALTMLD (71 aa)). A head domain (RuvB-H) region spans residues 255–333 (QEGLDYVDQK…HLGYPYEKKH (79 aa)). DNA is bound by residues arginine 291, arginine 310, arginine 312, and arginine 315.

It belongs to the RuvB family. In terms of assembly, homohexamer. Forms an RuvA(8)-RuvB(12)-Holliday junction (HJ) complex. HJ DNA is sandwiched between 2 RuvA tetramers; dsDNA enters through RuvA and exits via RuvB. An RuvB hexamer assembles on each DNA strand where it exits the tetramer. Each RuvB hexamer is contacted by two RuvA subunits (via domain III) on 2 adjacent RuvB subunits; this complex drives branch migration. In the full resolvosome a probable DNA-RuvA(4)-RuvB(12)-RuvC(2) complex forms which resolves the HJ.

The protein resides in the cytoplasm. The catalysed reaction is ATP + H2O = ADP + phosphate + H(+). Functionally, the RuvA-RuvB-RuvC complex processes Holliday junction (HJ) DNA during genetic recombination and DNA repair, while the RuvA-RuvB complex plays an important role in the rescue of blocked DNA replication forks via replication fork reversal (RFR). RuvA specifically binds to HJ cruciform DNA, conferring on it an open structure. The RuvB hexamer acts as an ATP-dependent pump, pulling dsDNA into and through the RuvAB complex. RuvB forms 2 homohexamers on either side of HJ DNA bound by 1 or 2 RuvA tetramers; 4 subunits per hexamer contact DNA at a time. Coordinated motions by a converter formed by DNA-disengaged RuvB subunits stimulates ATP hydrolysis and nucleotide exchange. Immobilization of the converter enables RuvB to convert the ATP-contained energy into a lever motion, pulling 2 nucleotides of DNA out of the RuvA tetramer per ATP hydrolyzed, thus driving DNA branch migration. The RuvB motors rotate together with the DNA substrate, which together with the progressing nucleotide cycle form the mechanistic basis for DNA recombination by continuous HJ branch migration. Branch migration allows RuvC to scan DNA until it finds its consensus sequence, where it cleaves and resolves cruciform DNA. This is Holliday junction branch migration complex subunit RuvB from Streptococcus equi subsp. zooepidemicus (strain MGCS10565).